Consider the following 135-residue polypeptide: Large ribosomal subunit protein eL32 (135 aa).

K9 is covalently cross-linked (Glycyl lysine isopeptide (Lys-Gly) (interchain with G-Cter in SUMO2)). K50 is modified (N6-succinyllysine). Phosphoserine is present on S62.

Belongs to the eukaryotic ribosomal protein eL32 family. Component of the large ribosomal subunit.

The protein resides in the cytoplasm. In terms of biological role, component of the large ribosomal subunit. The ribosome is a large ribonucleoprotein complex responsible for the synthesis of proteins in the cell. The chain is Large ribosomal subunit protein eL32 (RPL32) from Oryctolagus cuniculus (Rabbit).